The chain runs to 259 residues: Global transcriptional regulator CodY (259 aa).

The segment at 1–155 is GAF domain; the sequence is MDLLSRARKI…GATVVGMEIL (155 aa). A DNA-binding region (H-T-H motif) is located at residues 203–222; the sequence is ASKIADRVGITRSVIVNALR. A Phosphoserine modification is found at S215.

The protein belongs to the CodY family.

Its subcellular location is the cytoplasm. Functionally, DNA-binding global transcriptional regulator which is involved in the adaptive response to starvation and acts by directly or indirectly controlling the expression of numerous genes in response to nutrient availability. During rapid exponential growth, CodY is highly active and represses genes whose products allow adaptation to nutrient depletion. This is Global transcriptional regulator CodY from Oceanobacillus iheyensis (strain DSM 14371 / CIP 107618 / JCM 11309 / KCTC 3954 / HTE831).